The primary structure comprises 254 residues: 3-dehydroquinate dehydratase (254 aa).

Residues 47-49 and Arg-83 contribute to the 3-dehydroquinate site; that span reads EFR. Residue His-144 is the Proton donor/acceptor of the active site. Catalysis depends on Lys-171, which acts as the Schiff-base intermediate with substrate. 3-dehydroquinate-binding residues include Arg-213, Ser-232, and Gln-236.

Belongs to the type-I 3-dehydroquinase family. In terms of assembly, homodimer.

The enzyme catalyses 3-dehydroquinate = 3-dehydroshikimate + H2O. The protein operates within metabolic intermediate biosynthesis; chorismate biosynthesis; chorismate from D-erythrose 4-phosphate and phosphoenolpyruvate: step 3/7. In terms of biological role, involved in the third step of the chorismate pathway, which leads to the biosynthesis of aromatic amino acids. Catalyzes the cis-dehydration of 3-dehydroquinate (DHQ) and introduces the first double bond of the aromatic ring to yield 3-dehydroshikimate. The chain is 3-dehydroquinate dehydratase from Neisseria gonorrhoeae (strain ATCC 700825 / FA 1090).